A 210-amino-acid chain; its full sequence is Signal peptidase complex catalytic subunit SEC11 (210 aa).

At 1 to 21 the chain is on the cytoplasmic side; sequence MLAGLSPHLSNLRRSLTQVLN. Residues 22-38 traverse the membrane as a helical; Signal-anchor for type II membrane protein segment; that stretch reads FALVLSTAFMMWKGLSI. Topologically, residues 39–210 are lumenal; that stretch reads YTNSSSPIVV…MGAMVILQRE (172 aa). N41 carries an N-linked (GlcNAc...) asparagine glycan. Residues S53, H92, and D152 each act as charge relay system in the active site. The tract at residues 196 to 207 is C-terminal short (CTS) helix; that stretch reads VLLGIMGAMVIL.

The protein belongs to the peptidase S26B family. Component of the signal peptidase complex (SPC) composed of a catalytic subunit SEC11 and three accessory subunits SPC1, SPC2 and SPC3. The complex induces a local thinning of the ER membrane which is used to measure the length of the signal peptide (SP) h-region of protein substrates. This ensures the selectivity of the complex towards h-regions shorter than 18-20 amino acids. SPC associates with the translocon complex.

Its subcellular location is the endoplasmic reticulum membrane. It catalyses the reaction Cleavage of hydrophobic, N-terminal signal or leader sequences from secreted and periplasmic proteins.. Catalytic component of the signal peptidase complex (SPC) which catalyzes the cleavage of N-terminal signal sequences from nascent proteins as they are translocated into the lumen of the endoplasmic reticulum. Specifically cleaves N-terminal signal peptides that contain a hydrophobic alpha-helix (h-region) shorter than 18-20 amino acids. The chain is Signal peptidase complex catalytic subunit SEC11 (SEC11) from Coccidioides posadasii (strain C735) (Valley fever fungus).